The primary structure comprises 141 residues: Hemoglobin subunit alpha (141 aa).

Residues 1 to 141 (VLSPTDKTNV…VSTVLTSKYR (141 aa)) enclose the Globin domain. Residue serine 3 is modified to Phosphoserine. Position 7 is an N6-succinyllysine (lysine 7). Threonine 8 carries the phosphothreonine modification. Residue lysine 11 is modified to N6-succinyllysine. Phosphotyrosine is present on tyrosine 24. Serine 35 carries the post-translational modification Phosphoserine. Lysine 40 is subject to N6-succinyllysine. Phosphoserine is present on serine 49. An O2-binding site is contributed by histidine 58. Residue histidine 87 participates in heme b binding. Serine 102 bears the Phosphoserine mark. Threonine 108 bears the Phosphothreonine mark. At serine 124 the chain carries Phosphoserine. Phosphothreonine is present on residues threonine 134 and threonine 137. Residue serine 138 is modified to Phosphoserine.

This sequence belongs to the globin family. Heterotetramer of two alpha chains and two beta chains. In terms of tissue distribution, red blood cells.

Its function is as follows. Involved in oxygen transport from the lung to the various peripheral tissues. Hemopressin acts as an antagonist peptide of the cannabinoid receptor CNR1. Hemopressin-binding efficiently blocks cannabinoid receptor CNR1 and subsequent signaling. This is Hemoglobin subunit alpha (HBA) from Rhinoceros unicornis (Greater Indian rhinoceros).